A 375-amino-acid polypeptide reads, in one-letter code: Succinyl-diaminopimelate desuccinylase (375 aa).

Histidine 66 contacts Zn(2+). Residue aspartate 68 is part of the active site. Aspartate 99 lines the Zn(2+) pocket. The Proton acceptor role is filled by glutamate 133. Zn(2+)-binding residues include glutamate 134, glutamate 162, and histidine 348.

It belongs to the peptidase M20A family. DapE subfamily. As to quaternary structure, homodimer. Zn(2+) is required as a cofactor. The cofactor is Co(2+).

It carries out the reaction N-succinyl-(2S,6S)-2,6-diaminopimelate + H2O = (2S,6S)-2,6-diaminopimelate + succinate. The protein operates within amino-acid biosynthesis; L-lysine biosynthesis via DAP pathway; LL-2,6-diaminopimelate from (S)-tetrahydrodipicolinate (succinylase route): step 3/3. In terms of biological role, catalyzes the hydrolysis of N-succinyl-L,L-diaminopimelic acid (SDAP), forming succinate and LL-2,6-diaminopimelate (DAP), an intermediate involved in the bacterial biosynthesis of lysine and meso-diaminopimelic acid, an essential component of bacterial cell walls. In Salmonella dublin (strain CT_02021853), this protein is Succinyl-diaminopimelate desuccinylase.